We begin with the raw amino-acid sequence, 345 residues long: S-adenosylmethionine:tRNA ribosyltransferase-isomerase (345 aa).

The protein belongs to the QueA family. In terms of assembly, monomer.

It is found in the cytoplasm. The enzyme catalyses 7-aminomethyl-7-carbaguanosine(34) in tRNA + S-adenosyl-L-methionine = epoxyqueuosine(34) in tRNA + adenine + L-methionine + 2 H(+). It participates in tRNA modification; tRNA-queuosine biosynthesis. Transfers and isomerizes the ribose moiety from AdoMet to the 7-aminomethyl group of 7-deazaguanine (preQ1-tRNA) to give epoxyqueuosine (oQ-tRNA). This Thermodesulfovibrio yellowstonii (strain ATCC 51303 / DSM 11347 / YP87) protein is S-adenosylmethionine:tRNA ribosyltransferase-isomerase.